A 766-amino-acid chain; its full sequence is Alpha-onocerin synthase LCD (766 aa).

PFTB repeat units follow at residues 101-143, 151-192, 456-507, 517-558, 594-634, 643-684, and 705-752; these read LCRA…GALD, QREI…RLMG, QESY…STTD, IHEC…PGYK, IQEG…LASG, IQRA…HVVH, and LHRA…WALG. The active-site Proton donor is the D488.

It belongs to the terpene cyclase/mutase family.

It carries out the reaction pre-alpha-onocerin = alpha-onocerin. It participates in secondary metabolite biosynthesis; terpenoid biosynthesis. Oxidosqualene cyclase involved in the biosynthesis of alpha-onocerin, a triterpenoid characterized by a symmetrical structure due to cyclizations at both termini of dioxidosqualene that inhibits acetylcholinesterase. Catalyzes the second half of the cyclization, exclusively from pre-alpha-onocerin. The chain is Alpha-onocerin synthase LCD from Lycopodium clavatum (Stag's-horn clubmoss).